The sequence spans 432 residues: Anaerobic glycerol-3-phosphate dehydrogenase subunit B (432 aa).

It belongs to the anaerobic G-3-P dehydrogenase subunit B family. Composed of a catalytic GlpA/B dimer and of membrane bound GlpC. FMN is required as a cofactor.

The catalysed reaction is a quinone + sn-glycerol 3-phosphate = dihydroxyacetone phosphate + a quinol. The protein operates within polyol metabolism; glycerol degradation via glycerol kinase pathway; glycerone phosphate from sn-glycerol 3-phosphate (anaerobic route): step 1/1. Its function is as follows. Conversion of glycerol 3-phosphate to dihydroxyacetone. Uses fumarate or nitrate as electron acceptor. This chain is Anaerobic glycerol-3-phosphate dehydrogenase subunit B (glpB), found in Haemophilus influenzae (strain ATCC 51907 / DSM 11121 / KW20 / Rd).